The sequence spans 202 residues: Guanylate kinase (202 aa).

One can recognise a Guanylate kinase-like domain in the interval 3–181 (GNLFIITAPS…ALEDLRAIIR (179 aa)). 10–17 (APSGAGKT) provides a ligand contact to ATP.

This sequence belongs to the guanylate kinase family.

The protein localises to the cytoplasm. It catalyses the reaction GMP + ATP = GDP + ADP. Its function is as follows. Essential for recycling GMP and indirectly, cGMP. The protein is Guanylate kinase of Methylobacillus flagellatus (strain ATCC 51484 / DSM 6875 / VKM B-1610 / KT).